The chain runs to 307 residues: 4-hydroxy-tetrahydrodipicolinate synthase (307 aa).

T49 lines the pyruvate pocket. Y138 (proton donor/acceptor) is an active-site residue. Residue K166 is the Schiff-base intermediate with substrate of the active site. I207 contributes to the pyruvate binding site.

The protein belongs to the DapA family. In terms of assembly, homotetramer; dimer of dimers.

It localises to the cytoplasm. The enzyme catalyses L-aspartate 4-semialdehyde + pyruvate = (2S,4S)-4-hydroxy-2,3,4,5-tetrahydrodipicolinate + H2O + H(+). It participates in amino-acid biosynthesis; L-lysine biosynthesis via DAP pathway; (S)-tetrahydrodipicolinate from L-aspartate: step 3/4. Its function is as follows. Catalyzes the condensation of (S)-aspartate-beta-semialdehyde [(S)-ASA] and pyruvate to 4-hydroxy-tetrahydrodipicolinate (HTPA). This chain is 4-hydroxy-tetrahydrodipicolinate synthase, found in Limosilactobacillus reuteri (strain DSM 20016) (Lactobacillus reuteri).